Consider the following 293-residue polypeptide: Glutamyl-Q tRNA(Asp) synthetase (293 aa).

L-glutamate-binding positions include 8–12 (RFAPT) and Glu-44. Positions 11 to 21 (PTPSGYLHFGS) match the 'HIGH' region motif. The Zn(2+) site is built by Cys-100, Cys-102, Tyr-114, and Cys-118. Positions 171 and 189 each coordinate L-glutamate. The 'KMSKS' region signature appears at 227–231 (KLGKS). Lys-230 contributes to the ATP binding site.

The protein belongs to the class-I aminoacyl-tRNA synthetase family. GluQ subfamily. The cofactor is Zn(2+).

Its function is as follows. Catalyzes the tRNA-independent activation of glutamate in presence of ATP and the subsequent transfer of glutamate onto a tRNA(Asp). Glutamate is transferred on the 2-amino-5-(4,5-dihydroxy-2-cyclopenten-1-yl) moiety of the queuosine in the wobble position of the QUC anticodon. This is Glutamyl-Q tRNA(Asp) synthetase from Pseudomonas aeruginosa (strain LESB58).